The following is a 94-amino-acid chain: Co-chaperonin GroES (94 aa).

Belongs to the GroES chaperonin family. Heptamer of 7 subunits arranged in a ring. Interacts with the chaperonin GroEL.

The protein localises to the cytoplasm. In terms of biological role, together with the chaperonin GroEL, plays an essential role in assisting protein folding. The GroEL-GroES system forms a nano-cage that allows encapsulation of the non-native substrate proteins and provides a physical environment optimized to promote and accelerate protein folding. GroES binds to the apical surface of the GroEL ring, thereby capping the opening of the GroEL channel. The sequence is that of Co-chaperonin GroES from Clostridium botulinum (strain Alaska E43 / Type E3).